The chain runs to 417 residues: Serine hydroxymethyltransferase (417 aa).

(6S)-5,6,7,8-tetrahydrofolate contacts are provided by residues L121 and 125–127; that span reads GHL. At K229 the chain carries N6-(pyridoxal phosphate)lysine. 355–357 lines the (6S)-5,6,7,8-tetrahydrofolate pocket; that stretch reads SPF.

It belongs to the SHMT family. As to quaternary structure, homodimer. Requires pyridoxal 5'-phosphate as cofactor.

It localises to the cytoplasm. The catalysed reaction is (6R)-5,10-methylene-5,6,7,8-tetrahydrofolate + glycine + H2O = (6S)-5,6,7,8-tetrahydrofolate + L-serine. It functions in the pathway one-carbon metabolism; tetrahydrofolate interconversion. The protein operates within amino-acid biosynthesis; glycine biosynthesis; glycine from L-serine: step 1/1. Its function is as follows. Catalyzes the reversible interconversion of serine and glycine with tetrahydrofolate (THF) serving as the one-carbon carrier. This reaction serves as the major source of one-carbon groups required for the biosynthesis of purines, thymidylate, methionine, and other important biomolecules. Also exhibits THF-independent aldolase activity toward beta-hydroxyamino acids, producing glycine and aldehydes, via a retro-aldol mechanism. This is Serine hydroxymethyltransferase from Shewanella putrefaciens (strain CN-32 / ATCC BAA-453).